The chain runs to 1168 residues: Protein VARIATION IN COMPOUND TRIGGERED ROOT growth response (1168 aa).

Residues 10–171 enclose the TIR domain; sequence WVYDVFLSFS…EIANDVLAKL (162 aa). Glutamate 85 is a catalytic residue. The 266-residue stretch at 187–452 folds into the NB-ARC domain; that stretch reads EDHIANMSVL…ACLFNHVKVR (266 aa). LRR repeat units follow at residues 539–562, 606–629, 631–653, 676–699, 701–720, 721–744, 795–820, 839–865, 873–896, and 1065–1089; these read TSKVSEFCVHENAFKGMGNLLFLD, LRNLVKLEMHDSKLEKLWEGAMSF, CLKELDMWASKYLKEIPDLSKAT, LNKLLELNMEYCGELETLPTGFNL, SLDYLNFNECWKLRTFPEFA, TNISNLILAETSIEEYPSNLYFKN, LNNLERLDICYCRNLESLPTGINLES, STNIKYLDLDQTGIEEVPWQIENFFNL, CRELKCVSLNIFKLKHLGEVSFSN, and NVPLSQLNYDHVDINIHITSGDWRS.

It belongs to the disease resistance NB-LRR family. In terms of assembly, part of a nuclear protein complex made of VICTR, PAD4 and EDS1. Interacts (via TIR domain) with PAD4 and EDS1.

It is found in the cytoplasm. It localises to the nucleus. It catalyses the reaction NAD(+) + H2O = ADP-D-ribose + nicotinamide + H(+). Functionally, disease resistance protein of the TIR-NB-LRR-type. Part of the RPS6 locus that contains a cluster of several paralogous disease resistance (R) genes. Resistance proteins guard the plant against pathogens that contain an appropriate avirulence protein via an indirect interaction with this avirulence protein. That triggers a defense system including the hypersensitive response, which restricts the pathogen growth. Required for [5-(3,4-dichlorophenyl)furan-2-yl]-piperidine-1-ylmethanethione-(DFPM-) induced root growth arrest due to reduced number of meristem cells in the division zone of the primary root and inhibition of abscisic acid- (ABA-) induced stomatal closing. The chain is Protein VARIATION IN COMPOUND TRIGGERED ROOT growth response (VICTR) from Arabidopsis thaliana (Mouse-ear cress).